We begin with the raw amino-acid sequence, 879 residues long: Metabotropic glutamate receptor 3 (879 aa).

Positions 1–22 (MKMLTRLQVLMLALFSKGFLVS) are cleaved as a signal peptide. Topologically, residues 23-576 (LGDHNFMRRE…EDYIRWEDAW (554 aa)) are extracellular. Cys57 and Cys99 are joined by a disulfide. Residues Ser151 and 172–174 (AST) each bind L-glutamate. The N-linked (GlcNAc...) asparagine glycan is linked to Asn209. Residue Tyr222 participates in L-glutamate binding. 7 cysteine pairs are disulfide-bonded: Cys240–Cys527, Cys361–Cys373, Cys412–Cys419, Cys509–Cys528, Cys513–Cys531, Cys534–Cys546, and Cys549–Cys562. Asn292 is a glycosylation site (N-linked (GlcNAc...) asparagine). Asp301 provides a ligand contact to L-glutamate. Lys389 serves as a coordination point for L-glutamate. N-linked (GlcNAc...) asparagine glycans are attached at residues Asn414 and Asn439. A helical transmembrane segment spans residues 577–599 (AIGPVTIACLGFMCTCIVITVFI). Topologically, residues 600-613 (KHNNTPLVKASGRE) are cytoplasmic. Residues 614-634 (LCYILLFGVSLSYCMTFFFIA) form a helical membrane-spanning segment. Residues 635–645 (KPSPVICALRR) lie on the Extracellular side of the membrane. Residues 646-664 (LGLGTSFAICYSALLTKTN) traverse the membrane as a helical segment. At 665–688 (CIARIFDGVKNGAQRPKFISPSSQ) the chain is on the cytoplasmic side. Residues 689 to 709 (VFICLGLILVQIVMVSVWLIL) form a helical membrane-spanning segment. Over 710 to 734 (ETPGTRRYTLPEKRETVILKCNVKD) the chain is Extracellular. The helical transmembrane segment at 735 to 756 (SSMLISLTYDVVLVILCTVYAF) threads the bilayer. Residues 757 to 769 (KTRKCPENFNEAK) lie on the Cytoplasmic side of the membrane. A helical membrane pass occupies residues 770–792 (FIGFTMYTTCIIWLAFLPIFYVT). The Extracellular segment spans residues 793–802 (SSDYRVQTTT). The helical transmembrane segment at 803–828 (MCISVSLSGFVVLGCLFAPKVHIVLF) threads the bilayer. Residues 829–879 (QPQKNVVTHRLHLNRFSVSGTATTYSQSSASTYVPTVCNGREVLDSTTSSL) are Cytoplasmic-facing.

It belongs to the G-protein coupled receptor 3 family. Interacts with TAMALIN.

Its subcellular location is the cell membrane. G-protein coupled receptor for glutamate. Ligand binding causes a conformation change that triggers signaling via guanine nucleotide-binding proteins (G proteins) and modulates the activity of down-stream effectors. Signaling inhibits adenylate cyclase activity. The protein is Metabotropic glutamate receptor 3 (Grm3) of Mus musculus (Mouse).